Reading from the N-terminus, the 709-residue chain is Nucleobase-ascorbate transporter 12 (709 aa).

The interval 1-145 (MSSSDPKPGP…GSGDPVRRPG (145 aa)) is disordered. The segment covering 7–19 (KPGPKPGPWPPTP) has biased composition (pro residues). Serine 40 is modified (phosphoserine). Residues 41–53 (GETTATDSSSGQL) are compositionally biased toward polar residues. 2 stretches are compositionally biased toward basic and acidic residues: residues 89–98 (ETDKDKKEKP) and 113–122 (QPVKRRRDSD). Helical transmembrane passes span 190–210 (YLSMLGSLILVPLVIVPAMGG), 218–238 (VVSTVLFVSGITTLLHTSFGS), 240–260 (LPLIQGPSFVFLAPALAIINS), 283–303 (IIIGSAFQAVLGYSGLMSLIL), 308–328 (PVVVAPTVAAVGLSFYSYGFP), 329–349 (LVGKCLEIGVVQILLVIIFAL), 361–381 (IFLIYAVPLSLAITWAAAFLL), 438–458 (WGVPLFNWKMAFVMCVVSVIA), 530–550 (GACVLVIFSLVGKVGGFLASI), 551–571 (PQVMVASLLCFMWAMFTALGL), 585–605 (IIIVGLSLFFSLSVPAYFQQY), and 639–659 (YVMNTLLSMSMVIAFIMAVIL).

This sequence belongs to the nucleobase:cation symporter-2 (NCS2) (TC 2.A.40) family. In terms of tissue distribution, ubiquitous.

The protein localises to the cell membrane. This chain is Nucleobase-ascorbate transporter 12 (NAT12), found in Arabidopsis thaliana (Mouse-ear cress).